The following is a 422-amino-acid chain: E3 ubiquitin-protein ligase CBLL2 (422 aa).

The segment at 54–94 adopts an RING-type zinc-finger fold; that stretch reads CDKCDLPIKIYGRIIPCKHAFCYNCANLYDKIGYKICPRCS. Positions 93–151 are HYB domain; sequence CSYPVLRIEEHKRGSVFMCSVVQGCKRTYLSQKSLQAHIKRRHKRARKQVASASLEKLR. Residues 109–135 form a C2H2-type zinc finger; sequence FMCSVVQGCKRTYLSQKSLQAHIKRRH. Disordered regions lie at residues 190 to 213 and 378 to 422; these read MQQM…PELS and QTDA…HRPY. Residues 195–205 are compositionally biased toward basic and acidic residues; sequence HEQHNQPHKDL. Positions 393–405 are enriched in pro residues; it reads LPPPPPTWSPPPS. The span at 410–422 shows a compositional bias: basic residues; that stretch reads GSHHSYQRRHRPY.

In terms of assembly, homodimer.

The protein localises to the cytoplasm. The catalysed reaction is S-ubiquitinyl-[E2 ubiquitin-conjugating enzyme]-L-cysteine + [acceptor protein]-L-lysine = [E2 ubiquitin-conjugating enzyme]-L-cysteine + N(6)-ubiquitinyl-[acceptor protein]-L-lysine.. Its pathway is protein modification; protein ubiquitination. Functionally, E3 ubiquitin ligase catalyzing the covalent attachment of ubiquitin moieties onto substrate proteins. May operate on tyrosine-phosphorylated SRC substrates. The polypeptide is E3 ubiquitin-protein ligase CBLL2 (CBLL2) (Macaca fascicularis (Crab-eating macaque)).